The primary structure comprises 290 residues: Tubulin polyglutamylase complex subunit 1 (290 aa).

Residues 1 to 30 are disordered; that stretch reads MAAVEKRRQAVPPPAGFTDSGRQSVSRAAG. Serine 34 and serine 266 each carry phosphoserine.

As to quaternary structure, part of the neuronal tubulin polyglutamylase complex which contains TPGS1, TPGS2, TTLL1, LRRC49 and NICN1. Interacts with PCM1, CSTPP1 and LRRC49.

Its subcellular location is the cytoplasm. The protein localises to the cytoskeleton. It is found in the cilium axoneme. It localises to the flagellum axoneme. The protein resides in the cilium basal body. Its subcellular location is the flagellum basal body. The protein localises to the cell projection. It is found in the axon. It localises to the dendrite. The protein resides in the microtubule organizing center. Its subcellular location is the centrosome. The protein localises to the centriolar satellite. In terms of biological role, subunit of the tubulin polyglutamylase complex (TPGC). The complex mediates cilia and flagella polyglutamylation which is essential for their biogenesis and motility. May act in the targeting of the tubulin polyglutamylase complex. Required for the development of the spermatid flagellum. The sequence is that of Tubulin polyglutamylase complex subunit 1 from Homo sapiens (Human).